A 165-amino-acid chain; its full sequence is Cyclic pyranopterin monophosphate synthase (165 aa).

Substrate is bound by residues 76 to 78 (LCH) and 114 to 115 (ME). Residue Asp-129 is part of the active site.

The protein belongs to the MoaC family. As to quaternary structure, homohexamer; trimer of dimers.

The catalysed reaction is (8S)-3',8-cyclo-7,8-dihydroguanosine 5'-triphosphate = cyclic pyranopterin phosphate + diphosphate. Its pathway is cofactor biosynthesis; molybdopterin biosynthesis. Functionally, catalyzes the conversion of (8S)-3',8-cyclo-7,8-dihydroguanosine 5'-triphosphate to cyclic pyranopterin monophosphate (cPMP). This Brucella melitensis biotype 2 (strain ATCC 23457) protein is Cyclic pyranopterin monophosphate synthase.